The following is a 419-amino-acid chain: Glutamyl-tRNA reductase (419 aa).

Substrate-binding positions include 50–53, S108, 113–115, and Q119; these read TCNR and ETQ. C51 functions as the Nucleophile in the catalytic mechanism. Position 188-193 (188-193) interacts with NADP(+); the sequence is GAGEMI.

This sequence belongs to the glutamyl-tRNA reductase family. Homodimer.

The enzyme catalyses (S)-4-amino-5-oxopentanoate + tRNA(Glu) + NADP(+) = L-glutamyl-tRNA(Glu) + NADPH + H(+). The protein operates within porphyrin-containing compound metabolism; protoporphyrin-IX biosynthesis; 5-aminolevulinate from L-glutamyl-tRNA(Glu): step 1/2. In terms of biological role, catalyzes the NADPH-dependent reduction of glutamyl-tRNA(Glu) to glutamate 1-semialdehyde (GSA). This chain is Glutamyl-tRNA reductase, found in Albidiferax ferrireducens (strain ATCC BAA-621 / DSM 15236 / T118) (Rhodoferax ferrireducens).